Here is a 480-residue protein sequence, read N- to C-terminus: MRVLNVASEAYPWIKTGGLADVAGALPAALAEHDVDMRTLLPAYAGLRQRPETRPVHHYADLFGGAASILEARLTGGLTLYLLDAPHLYDRPGGPYTDANGRDWADNAERFAAFCRAAADIALGILPDWTPDIVHAHDWQAGLVPAYLALSEASPRPPVLFTIHNLAFQGVVPRDRLAALLLPPDSFSVDGVEYYGQIGLLKAGLHYADALTTVSPSYAREIQTDTGGMGLGGLLRDRAAVLNGLLNGIDMTEWNPAHDPHVKAHFDRHSLEHRTINREALRTRFGLDSSAGPLFGIVSRLTGQKGIDLVLNALPFLISQQAQLVVLGSGDKGLEQGLLQAAQTHPRQIAVFSGYDEALSRQIFSGADAMLIPSRFEPCGLTQLYAMRYGAVPIVSRVGGLADTIIDANTAACEAGVATGLMFQPDGEDSLIEPLSRAIRLFHQAEIWERLQHRGMETDSSWTLRSTAYVALYTRLLSLR.

K15 is a binding site for ADP-alpha-D-glucose.

Belongs to the glycosyltransferase 1 family. Bacterial/plant glycogen synthase subfamily.

It carries out the reaction [(1-&gt;4)-alpha-D-glucosyl](n) + ADP-alpha-D-glucose = [(1-&gt;4)-alpha-D-glucosyl](n+1) + ADP + H(+). Its pathway is glycan biosynthesis; glycogen biosynthesis. Functionally, synthesizes alpha-1,4-glucan chains using ADP-glucose. This Granulibacter bethesdensis (strain ATCC BAA-1260 / CGDNIH1) protein is Glycogen synthase.